A 518-amino-acid chain; its full sequence is Membrane-bound glycerophospholipid O-acyltransferase 2 (518 aa).

The next 6 membrane-spanning stretches (helical) occupy residues 21-41, 60-80, 87-107, 183-203, 230-250, and 267-283; these read PVDQ…AIWF, TLLG…HFVI, YLMI…FALG, FMGI…FIEG, IAVA…MTIT, and ASWP…LMAA. Catalysis depends on residues asparagine 341 and histidine 372. 3 helical membrane passes run 365 to 385, 415 to 435, and 443 to 463; these read FILS…FLTG, IITW…FVLL, and FYSS…LVFP.

It belongs to the membrane-bound acyltransferase family.

It localises to the endoplasmic reticulum membrane. The enzyme catalyses a 1-acyl-sn-glycero-3-phosphocholine + an acyl-CoA = a 1,2-diacyl-sn-glycero-3-phosphocholine + CoA. It carries out the reaction a 1-acyl-sn-glycero-3-phosphoethanolamine + an acyl-CoA = a 1,2-diacyl-sn-glycero-3-phosphoethanolamine + CoA. The catalysed reaction is a 1-acyl-sn-glycero-3-phosphate + an acyl-CoA = a 1,2-diacyl-sn-glycero-3-phosphate + CoA. It catalyses the reaction (9Z)-hexadecenoyl-CoA + 1-hexadecanoyl-sn-glycero-3-phosphocholine = 1-hexadecanoyl-2-(9Z-hexadecenoyl)-sn-glycero-3-phosphocholine + CoA. The enzyme catalyses 1-hexadecanoyl-sn-glycero-3-phosphoethanolamine + (9Z)-octadecenoyl-CoA = 1-hexadecanoyl-2-(9Z-octadecenoyl)-sn-glycero-3-phosphoethanolamine + CoA. It carries out the reaction 1-hexadecanoyl-sn-glycero-3-phosphoethanolamine + (9Z)-hexadecenoyl-CoA = 1-hexadecanoyl-2-(9Z)-hexadecenoyl-sn-glycero-3-phosphoethanolamine + CoA. The catalysed reaction is 1-(9Z-octadecenoyl)-sn-glycero-3-phospho-L-serine + hexadecanoyl-CoA = 1-(9Z)-octadecenoyl-2-hexadecanoyl-sn-glycero-3-phosphoserine + CoA. It catalyses the reaction (9Z,12Z)-octadecadienoyl-CoA + 1-hexadecanoyl-sn-glycero-3-phosphocholine = 1-hexadecanoyl-2-(9Z,12Z-octadecadienoyl)-sn-glycero-3-phosphocholine + CoA. The enzyme catalyses 1-hexadecanoyl-sn-glycero-3-phosphocholine + (9Z)-octadecenoyl-CoA = 1-hexadecanoyl-2-(9Z-octadecenoyl)-sn-glycero-3-phosphocholine + CoA. It carries out the reaction 1-hexadecanoyl-sn-glycero-3-phosphate + (9Z)-hexadecenoyl-CoA = 1-hexadecanoyl-2-[(9Z)-hexadec-9-enoyl]-sn-glycero-3-phosphate + CoA. The catalysed reaction is 1-hexadecanoyl-sn-glycero-3-phosphate + (9Z)-octadecenoyl-CoA = 1-hexadecanoyl-2-(9Z-octadecenoyl)-sn-glycero-3-phosphate + CoA. It catalyses the reaction a 1-O-(1Z-alkenyl)-sn-glycero-3-phosphocholine + (9Z)-octadecenoyl-CoA = 1-O-(1Z)-alkenyl-2-(9Z)-octadecenoyl-sn-glycero-3-phosphocholine + CoA. The enzyme catalyses a 1-O-(1Z-alkenyl)-sn-glycero-3-phosphoethanolamine + (9Z)-octadecenoyl-CoA = 1-O-(1Z)-alkenyl-2-(9Z)-octadecenoyl-sn-glycero-3-phosphoethanolamine + CoA. It carries out the reaction 1-octadecanoyl-sn-glycero-3-phosphoethanolamine + (9Z)-octadecenoyl-CoA = 1-octadecanoyl-2-(9Z-octadecenoyl)-sn-glycero-3-phosphoethanolamine + CoA. The catalysed reaction is 1-octadecanoyl-sn-glycero-3-phosphocholine + (9Z)-octadecenoyl-CoA = 1-octadecanoyl-2-(9Z-octadecenoyl)-sn-glycero-3-phosphocholine + CoA. It catalyses the reaction 1-(9Z-octadecenoyl)-sn-glycero-3-phosphoethanolamine + (9Z)-octadecenoyl-CoA = 1,2-di-(9Z-octadecenoyl)-sn-glycero-3-phosphoethanolamine + CoA. Its pathway is lipid metabolism; phospholipid metabolism. Its function is as follows. Acyltransferase which catalyzes the transfer of an acyl group from an acyl-CoA to a lysophospholipid leading to the production of a phospholipid and participates in the reacylation step of the phospholipid remodeling pathway also known as the Lands cycle. May catalyze preferentially the acylation of lysophosphatidylethanolamine (1-acyl-sn-glycero-3-phosphoethanolamine or LPE) and lysophosphatidic acid (LPA) and to a lesser extend lysophosphatidylcholine (LPC) and lysophosphatidylserine (LPS). Prefers oleoyl-CoA as the acyl donor. This Gallus gallus (Chicken) protein is Membrane-bound glycerophospholipid O-acyltransferase 2.